The chain runs to 205 residues: MSASTSSHRPIKGILKNKSSSGSSVATSGQQSGGNIQDVKRKKSQKWDESSILATHRATYRDYDLMKANEPGTSYMNLQDDGEDSVRDVEGEDSVRGVEGKEAMAATDASDHSCEVEEEESNEAYMRKLLLHKQEKKRQFEIRRRLHYNEELNIKLARQLMWNDLQSEDDENEERPQATNEEKTAAEESEEAPLSGGLQTQSCDP.

Disordered stretches follow at residues 1–51 (MSAS…DESS) and 70–114 (EPGT…DHSC). The interval 12 to 17 (KGILKN) is required for binding PPP1CC. Positions 19 to 34 (SSSGSSVATSGQQSGG) are enriched in low complexity. Residues 43 to 55 (KSQKWDESSILAT) are required for binding PPP1CC. Basic and acidic residues predominate over residues 84–102 (DSVRDVEGEDSVRGVEGKE). A required for binding PPP1CC catalytic center, displacing metal ions and inhibition of PPP1CC catalytic activity region spans residues 147-150 (HYNE). The segment at 165–205 (LQSEDDENEERPQATNEEKTAAEESEEAPLSGGLQTQSCDP) is disordered. The segment covering 174–186 (ERPQATNEEKTAA) has biased composition (basic and acidic residues).

The protein belongs to the protein phosphatase inhibitor 2 family.

Functionally, functions as a protein phosphatase inhibitor. It inhibits activity of the catalytic subunit of PP1 and weakly inhibits the activity of myosin-associated phosphates. This chain is Protein phosphatase inhibitor 2 family member C (PPP1R2C), found in Macaca fascicularis (Crab-eating macaque).